We begin with the raw amino-acid sequence, 313 residues long: Putative S-adenosyl-L-methionine-dependent methyltransferase MAP_3563 (313 aa).

Residues Asp-139 and 168–169 (DL) contribute to the S-adenosyl-L-methionine site.

It belongs to the UPF0677 family.

Functionally, exhibits S-adenosyl-L-methionine-dependent methyltransferase activity. This is Putative S-adenosyl-L-methionine-dependent methyltransferase MAP_3563 from Mycolicibacterium paratuberculosis (strain ATCC BAA-968 / K-10) (Mycobacterium paratuberculosis).